A 468-amino-acid chain; its full sequence is Na(+)/H(+) antiporter NhaA (468 aa).

Helical transmembrane passes span 28–48, 79–99, 115–135, 143–163, 173–193, 196–216, 219–239, 240–260, 317–337, 356–376, 392–412, and 426–446; these read FLHV…IALV, LHFW…GMEI, ALPL…YLAF, AGWA…LALL, IFLL…IAFF, GGLD…VLGL, IGIG…TGLL, MTGA…PVVP, ALHP…NAGV, VAGA…WLLV, IVLI…IAML, and LGVL…GAIY.

This sequence belongs to the NhaA Na(+)/H(+) (TC 2.A.33) antiporter family.

The protein localises to the cell inner membrane. The enzyme catalyses Na(+)(in) + 2 H(+)(out) = Na(+)(out) + 2 H(+)(in). Its function is as follows. Na(+)/H(+) antiporter that extrudes sodium in exchange for external protons. This Bordetella petrii (strain ATCC BAA-461 / DSM 12804 / CCUG 43448) protein is Na(+)/H(+) antiporter NhaA.